Here is a 72-residue protein sequence, read N- to C-terminus: Translation initiation factor IF-1 (72 aa).

Residues 1-72 (MSKEENIEMQ…TKGRIIFRSR (72 aa)) enclose the S1-like domain.

It belongs to the IF-1 family. In terms of assembly, component of the 30S ribosomal translation pre-initiation complex which assembles on the 30S ribosome in the order IF-2 and IF-3, IF-1 and N-formylmethionyl-tRNA(fMet); mRNA recruitment can occur at any time during PIC assembly.

Its subcellular location is the cytoplasm. In terms of biological role, one of the essential components for the initiation of protein synthesis. Stabilizes the binding of IF-2 and IF-3 on the 30S subunit to which N-formylmethionyl-tRNA(fMet) subsequently binds. Helps modulate mRNA selection, yielding the 30S pre-initiation complex (PIC). Upon addition of the 50S ribosomal subunit IF-1, IF-2 and IF-3 are released leaving the mature 70S translation initiation complex. This chain is Translation initiation factor IF-1, found in Buchnera aphidicola subsp. Acyrthosiphon pisum (strain APS) (Acyrthosiphon pisum symbiotic bacterium).